A 256-amino-acid polypeptide reads, in one-letter code: GDSL esterase/lipase CPRD49 (256 aa).

Positions M1–G27 are cleaved as a signal peptide. S15 acts as the Nucleophile in catalysis. Residues N49 and N79 are each glycosylated (N-linked (GlcNAc...) asparagine). H213 is an active-site residue. An N-linked (GlcNAc...) asparagine glycan is attached at N243.

It belongs to the 'GDSL' lipolytic enzyme family. In terms of tissue distribution, specifically expressed in anthers (stages 8-12).

The protein resides in the secreted. The protein is GDSL esterase/lipase CPRD49 (CPRD49) of Arabidopsis thaliana (Mouse-ear cress).